A 354-amino-acid chain; its full sequence is UDP-N-acetylglucosamine--N-acetylmuramyl-(pentapeptide) pyrophosphoryl-undecaprenol N-acetylglucosamine transferase (354 aa).

Residues 15 to 17, Asn-127, Arg-163, Ser-191, Ile-244, 263 to 268, and Gln-288 each bind UDP-N-acetyl-alpha-D-glucosamine; these read TGG and ALTVSE.

This sequence belongs to the glycosyltransferase 28 family. MurG subfamily.

It localises to the cell inner membrane. It carries out the reaction di-trans,octa-cis-undecaprenyl diphospho-N-acetyl-alpha-D-muramoyl-L-alanyl-D-glutamyl-meso-2,6-diaminopimeloyl-D-alanyl-D-alanine + UDP-N-acetyl-alpha-D-glucosamine = di-trans,octa-cis-undecaprenyl diphospho-[N-acetyl-alpha-D-glucosaminyl-(1-&gt;4)]-N-acetyl-alpha-D-muramoyl-L-alanyl-D-glutamyl-meso-2,6-diaminopimeloyl-D-alanyl-D-alanine + UDP + H(+). The protein operates within cell wall biogenesis; peptidoglycan biosynthesis. In terms of biological role, cell wall formation. Catalyzes the transfer of a GlcNAc subunit on undecaprenyl-pyrophosphoryl-MurNAc-pentapeptide (lipid intermediate I) to form undecaprenyl-pyrophosphoryl-MurNAc-(pentapeptide)GlcNAc (lipid intermediate II). The chain is UDP-N-acetylglucosamine--N-acetylmuramyl-(pentapeptide) pyrophosphoryl-undecaprenol N-acetylglucosamine transferase from Serratia proteamaculans (strain 568).